Here is a 122-residue protein sequence, read N- to C-terminus: Probable glycine cleavage system H protein (122 aa).

A Lipoyl-binding domain is found at 23-104; that stretch reads IATVGITDYA…PYGNWLVKMK (82 aa). An N6-lipoyllysine modification is found at Lys64.

This sequence belongs to the GcvH family. The glycine cleavage system is composed of four proteins: P, T, L and H. Requires (R)-lipoate as cofactor.

Functionally, the glycine cleavage system catalyzes the degradation of glycine. The H protein shuttles the methylamine group of glycine from the P protein to the T protein. This Thermoplasma volcanium (strain ATCC 51530 / DSM 4299 / JCM 9571 / NBRC 15438 / GSS1) protein is Probable glycine cleavage system H protein.